An 855-amino-acid chain; its full sequence is Envelope glycoprotein gp150 (855 aa).

At 1-784 (MAEGGFTHNQ…WIGKIPQYLK (784 aa)) the chain is on the extracellular side. 20 N-linked (GlcNAc...) asparagine; by host glycosylation sites follow: Asn135, Asn220, Asn258, Asn269, Asn274, Asn298, Asn330, Asn336, Asn342, Asn372, Asn418, Asn422, Asn448, Asn469, Asn481, Asn499, Asn518, Asn531, Asn548, and Asn551. The segment at 615-635 (IMLALATVLSMAGAGTGATAI) is fusion peptide. Positions 642 to 692 (HQVLATHQQALEKITEALKINNLRLITLEHQVLVIGLRVEAIEKFLYTAFA) form a coiled coil. Residues 661–679 (INNLRLITLEHQVLVIGLR) are immunosuppression. N-linked (GlcNAc...) asparagine; by host glycosylation is found at Asn716, Asn720, Asn728, and Asn736. Positions 735 to 771 (YNQTRDLQNKFYEIIMDIEQNNVQGKTGIQQLQKWEN) form a coiled coil. Residues 785 to 805 (GLLGSVLGIGLGILLLLICLP) traverse the membrane as a helical segment. The Cytoplasmic portion of the chain corresponds to 806-855 (TLVDCIRNCTNKILGYTVIAMPEIDDEEVHLSVELRRNGRQCGISEKEEE).

The mature envelope protein (Env) consists of a trimer of SU-TM heterodimers attached by noncovalent interactions or by a labile interchain disulfide bond. Post-translationally, specific enzymatic cleavages in vivo yield mature proteins. Envelope glycoproteins are synthesized as an inactive precursor that is N-glycosylated and processed likely by host cell furin or by a furin-like protease in the Golgi to yield the mature SU and TM proteins. The cleavage site between SU and TM requires the minimal sequence [KR]-X-[KR]-R.

It is found in the virion membrane. The protein resides in the host cell membrane. Functionally, the surface protein (SU) attaches the virus to the host cell by binding to its receptor. This interaction triggers the refolding of the transmembrane protein (TM) and is thought to activate its fusogenic potential by unmasking its fusion peptide. Fusion occurs at the host cell plasma membrane. In terms of biological role, the transmembrane protein (TM) acts as a class I viral fusion protein. Under the current model, the protein has at least 3 conformational states: pre-fusion native state, pre-hairpin intermediate state, and post-fusion hairpin state. During viral and target cell membrane fusion, the coiled coil regions (heptad repeats) assume a trimer-of-hairpins structure, positioning the fusion peptide in close proximity to the C-terminal region of the ectodomain. The formation of this structure appears to drive apposition and subsequent fusion of viral and target cell membranes. Membranes fusion leads to delivery of the nucleocapsid into the cytoplasm. In Feline immunodeficiency virus (isolate TM2) (FIV), this protein is Envelope glycoprotein gp150 (env).